Here is a 128-residue protein sequence, read N- to C-terminus: Holo-[acyl-carrier-protein] synthase (128 aa).

Mg(2+) contacts are provided by Asp-8 and Glu-60.

This sequence belongs to the P-Pant transferase superfamily. AcpS family. It depends on Mg(2+) as a cofactor.

It localises to the cytoplasm. The catalysed reaction is apo-[ACP] + CoA = holo-[ACP] + adenosine 3',5'-bisphosphate + H(+). Its function is as follows. Transfers the 4'-phosphopantetheine moiety from coenzyme A to a Ser of acyl-carrier-protein. This Anaeromyxobacter dehalogenans (strain 2CP-1 / ATCC BAA-258) protein is Holo-[acyl-carrier-protein] synthase.